Consider the following 428-residue polypeptide: D-amino acid dehydrogenase (428 aa).

3-17 (VVILGSGVVGVASAY) contributes to the FAD binding site.

This sequence belongs to the DadA oxidoreductase family. It depends on FAD as a cofactor.

It catalyses the reaction a D-alpha-amino acid + A + H2O = a 2-oxocarboxylate + AH2 + NH4(+). It functions in the pathway amino-acid degradation; D-alanine degradation; NH(3) and pyruvate from D-alanine: step 1/1. Oxidative deamination of D-amino acids. This Burkholderia thailandensis (strain ATCC 700388 / DSM 13276 / CCUG 48851 / CIP 106301 / E264) protein is D-amino acid dehydrogenase.